A 352-amino-acid chain; its full sequence is Ion-translocating oxidoreductase complex subunit D (352 aa).

A run of 5 helical transmembrane segments spans residues 20-40, 42-62, 78-109, 123-143, and 148-168; these read IMLL…WFFG, GTLV…ALVL, ALLT…VIIA, PAMI…TSWL, and IAVN…GHTA. The residue at position 187 (threonine 187) is an FMN phosphoryl threonine. A run of 5 helical transmembrane segments spans residues 214–234, 242–262, 267–287, 301–321, and 322–342; these read ILAG…GVWL, WHIP…GWLF, LAAP…FFIL, LIFG…GGYP, and DGVA…DYYT.

Belongs to the NqrB/RnfD family. In terms of assembly, the complex is composed of six subunits: RsxA, RsxB, RsxC, RsxD, RsxE and RsxG. FMN is required as a cofactor.

The protein resides in the cell inner membrane. Functionally, part of a membrane-bound complex that couples electron transfer with translocation of ions across the membrane. Required to maintain the reduced state of SoxR. In Escherichia coli O139:H28 (strain E24377A / ETEC), this protein is Ion-translocating oxidoreductase complex subunit D.